The following is a 247-amino-acid chain: E3 SUMO-protein ligase NSE2 (247 aa).

At methionine 1 the chain carries N-acetylmethionine. Residues lysine 90 and lysine 107 each participate in a glycyl lysine isopeptide (Lys-Gly) (interchain with G-Cter in SUMO2) cross-link. Position 116 is a phosphoserine (serine 116). Residues lysine 125 and lysine 130 each participate in a glycyl lysine isopeptide (Lys-Gly) (interchain with G-Cter in SUMO2) cross-link. An SP-RING-type zinc finger spans residues 154-240 (VDEDMIVTQS…LRRAIESHNK (87 aa)). 4 residues coordinate Zn(2+): cysteine 185, histidine 187, cysteine 210, and cysteine 215.

This sequence belongs to the NSE2 family. In terms of assembly, component of the SMC5-SMC6 complex which consists at least of SMC5, SMC6, NSMCE2, NSMCE1, NSMCE4A or EID3 and NSMCE3. Sumoylated, possibly via autosumoylation.

The protein resides in the nucleus. The protein localises to the chromosome. Its subcellular location is the telomere. It localises to the PML body. It participates in protein modification; protein sumoylation. Functionally, E3 SUMO-protein ligase component of the SMC5-SMC6 complex, a complex involved in DNA double-strand break repair by homologous recombination. Is not be required for the stability of the complex. The complex may promote sister chromatid homologous recombination by recruiting the SMC1-SMC3 cohesin complex to double-strand breaks. Acts as an E3 ligase mediating SUMO attachment to various proteins such as SMC6L1 and TSNAX, the shelterin complex subunits TERF1, TERF2, TINF2 and TERF2IP, RAD51AP1, and maybe the cohesin components RAD21 and STAG2. Required for recruitment of telomeres to PML nuclear bodies. Required for sister chromatid cohesion during prometaphase and mitotic progression. In Mus musculus (Mouse), this protein is E3 SUMO-protein ligase NSE2 (Nsmce2).